Reading from the N-terminus, the 139-residue chain is D-ribose pyranase (139 aa).

His-20 functions as the Proton donor in the catalytic mechanism. Residues Asp-28, His-106, and 128-130 (FAN) each bind substrate.

It belongs to the RbsD / FucU family. RbsD subfamily. As to quaternary structure, homodecamer.

The protein resides in the cytoplasm. It carries out the reaction beta-D-ribopyranose = beta-D-ribofuranose. It functions in the pathway carbohydrate metabolism; D-ribose degradation; D-ribose 5-phosphate from beta-D-ribopyranose: step 1/2. Catalyzes the interconversion of beta-pyran and beta-furan forms of D-ribose. The sequence is that of D-ribose pyranase from Yersinia enterocolitica serotype O:8 / biotype 1B (strain NCTC 13174 / 8081).